Consider the following 261-residue polypeptide: Nickel import ATP-binding protein NikD (261 aa).

Positions 6 to 248 (LRIEGLTIAT…PRHDATRALV (243 aa)) constitute an ABC transporter domain. 41–48 (GASGSGKS) contributes to the ATP binding site.

It belongs to the ABC transporter superfamily. Nickel importer (TC 3.A.1.5.3) family. The complex is composed of two ATP-binding proteins (NikD and NikE), two transmembrane proteins (NikB and NikC) and a solute-binding protein (NikA).

It localises to the cell inner membrane. It catalyses the reaction Ni(2+)(out) + ATP + H2O = Ni(2+)(in) + ADP + phosphate + H(+). Part of the ABC transporter complex NikABCDE involved in nickel import. Responsible for energy coupling to the transport system. The sequence is that of Nickel import ATP-binding protein NikD from Rhodospirillum rubrum (strain ATCC 11170 / ATH 1.1.1 / DSM 467 / LMG 4362 / NCIMB 8255 / S1).